Reading from the N-terminus, the 179-residue chain is Large ribosomal subunit protein uL5 (179 aa).

This sequence belongs to the universal ribosomal protein uL5 family. As to quaternary structure, part of the 50S ribosomal subunit; part of the 5S rRNA/L5/L18/L25 subcomplex. Contacts the 5S rRNA and the P site tRNA. Forms a bridge to the 30S subunit in the 70S ribosome.

In terms of biological role, this is one of the proteins that bind and probably mediate the attachment of the 5S RNA into the large ribosomal subunit, where it forms part of the central protuberance. In the 70S ribosome it contacts protein S13 of the 30S subunit (bridge B1b), connecting the 2 subunits; this bridge is implicated in subunit movement. Contacts the P site tRNA; the 5S rRNA and some of its associated proteins might help stabilize positioning of ribosome-bound tRNAs. The polypeptide is Large ribosomal subunit protein uL5 (Prochlorococcus marinus (strain MIT 9211)).